Reading from the N-terminus, the 154-residue chain is Fibroblast growth factor 2 (154 aa).

Residues 1-9 (MAAGSITSL) constitute a propeptide that is removed on maturation. The segment at 1-20 (MAAGSITSLPALPEDGGGAF) is disordered. Asn35 contacts heparin. A Phosphotyrosine; by TEC modification is found at Tyr81. Lys94 participates in a covalent cross-link: Glycyl lysine isopeptide (Lys-Gly) (interchain with G-Cter in SUMO1). A heparin-binding region spans residues 127–143 (KRTGQYKLGSKTGPGQK).

It belongs to the heparin-binding growth factors family. As to quaternary structure, monomer. Homodimer. Interacts with FGFR1, FGFR2, FGFR3 and FGFR4. Affinity between fibroblast growth factors (FGFs) and their receptors is increased by heparan sulfate glycosaminoglycans that function as coreceptors. Interacts with CSPG4, FGFBP1 and TEC. Found in a complex with FGFBP1, FGF1 and FGF2. Interacts with FGFBP3. Interacts with integrin ITGAV:ITGB3; the interaction is required for FGF2 signaling. Interacts with SNORC (via the extracellular domain). Interacts with GPC3. Post-translationally, phosphorylation at Tyr-81 regulates FGF2 unconventional secretion. Found in all tissues examined.

The protein localises to the secreted. It is found in the nucleus. Functionally, acts as a ligand for FGFR1, FGFR2, FGFR3 and FGFR4. Also acts as an integrin ligand which is required for FGF2 signaling. Binds to integrin ITGAV:ITGB3. Plays an important role in the regulation of cell survival, cell division, cell differentiation and cell migration. Functions as a potent mitogen in vitro. Can induce angiogenesis. Mediates phosphorylation of ERK1/2 and thereby promotes retinal lens fiber differentiation. This chain is Fibroblast growth factor 2 (Fgf2), found in Rattus norvegicus (Rat).